Consider the following 143-residue polypeptide: Phosphatidylethanolamine-binding protein homolog R644 (143 aa).

The protein belongs to the phosphatidylethanolamine-binding protein family.

It localises to the virion. This chain is Phosphatidylethanolamine-binding protein homolog R644, found in Acanthamoeba polyphaga mimivirus (APMV).